The sequence spans 184 residues: ATP synthase subunit b, chloroplastic (184 aa).

Residues 27–49 traverse the membrane as a helical segment; the sequence is LATNPINLSVVLGVLIFFGKGVL.

Belongs to the ATPase B chain family. F-type ATPases have 2 components, F(1) - the catalytic core - and F(0) - the membrane proton channel. F(1) has five subunits: alpha(3), beta(3), gamma(1), delta(1), epsilon(1). F(0) has four main subunits: a(1), b(1), b'(1) and c(10-14). The alpha and beta chains form an alternating ring which encloses part of the gamma chain. F(1) is attached to F(0) by a central stalk formed by the gamma and epsilon chains, while a peripheral stalk is formed by the delta, b and b' chains.

It is found in the plastid. Its subcellular location is the chloroplast thylakoid membrane. Functionally, f(1)F(0) ATP synthase produces ATP from ADP in the presence of a proton or sodium gradient. F-type ATPases consist of two structural domains, F(1) containing the extramembraneous catalytic core and F(0) containing the membrane proton channel, linked together by a central stalk and a peripheral stalk. During catalysis, ATP synthesis in the catalytic domain of F(1) is coupled via a rotary mechanism of the central stalk subunits to proton translocation. Its function is as follows. Component of the F(0) channel, it forms part of the peripheral stalk, linking F(1) to F(0). In Chloranthus spicatus (Chulantree), this protein is ATP synthase subunit b, chloroplastic.